The sequence spans 457 residues: Transcription factor PCF7 (457 aa).

Positions 58-84 (STLHYLLQEKERAQQAHEQLQIYQQQQ) form a coiled coil. Positions 95 to 121 (RQPASRGPGGGGGGGDGGGSSGESTPV) are disordered. Positions 101 to 115 (GPGGGGGGGDGGGSS) are enriched in gly residues. Residues 140–198 (RKDRHSKVCTARGLRDRRVRLAAHTAIRFYDVQDRLGYDRPSKAVDWLMRNAKAAIDEL) form the TCP domain. Disordered regions lie at residues 199 to 231 (PDRA…GFGN) and 263 to 299 (KSLF…SNQQ). Polar residues predominate over residues 212 to 230 (STEQPEGTEQANSTSYGFG). Residues 268 to 278 (SSSTASGAASA) are compositionally biased toward low complexity.

Forms homodimers and heterodimers.

The protein resides in the nucleus. Its function is as follows. Transcription activator. Binds the promoter core sequence 5'-GGNCC-3'. The protein is Transcription factor PCF7 (PCF7) of Oryza sativa subsp. indica (Rice).